Reading from the N-terminus, the 178-residue chain is Large ribosomal subunit protein uL6 (178 aa).

Belongs to the universal ribosomal protein uL6 family. As to quaternary structure, part of the 50S ribosomal subunit.

Its function is as follows. This protein binds to the 23S rRNA, and is important in its secondary structure. It is located near the subunit interface in the base of the L7/L12 stalk, and near the tRNA binding site of the peptidyltransferase center. The polypeptide is Large ribosomal subunit protein uL6 (Streptococcus sanguinis (strain SK36)).